The primary structure comprises 592 residues: Calnexin (592 aa).

The N-terminal stretch at 1 to 20 (MEGKWLLCMLLVLGTAIVEA) is a signal peptide. Residues 21–481 (HDGHDDDVID…QMIEAAEERP (461 aa)) lie on the Lumenal side of the membrane. The Ca(2+) site is built by serine 74 and aspartate 117. Lysine 137 carries the post-translational modification N6-acetyllysine. An intrachain disulfide couples cysteine 160 to cysteine 194. An alpha-D-glucoside is bound by residues tyrosine 164, lysine 166, tyrosine 185, and aspartate 192. The segment at 260 to 345 (GNLLNDMTPP…AEKPEDWDED (86 aa)) is disordered. Residues 274–319 (REIEDPEDRKPEDWDERPKIPDPEAVKPDDWDEDAPAKIPDEEATK) are compositionally biased toward basic and acidic residues. The tract at residues 276–409 (IEDPEDRKPE…RKIPNPDFFE (134 aa)) is p domain (Extended arm). A run of 5 repeats spans residues 278–290 (DPEDRKPEDWDER), 295–307 (DPEAVKPDDWDED), 314–326 (DEEATKPEGWLDD), 333–345 (DPDAEKPEDWDED), and 348–358 (GEWEAPQIANP). 2 4 X approximate repeats regions span residues 278 to 345 (DPED…WDED) and 348 to 405 (GEWE…IPNP). Positions 323 to 345 (WLDDEPEYVPDPDAEKPEDWDED) are enriched in acidic residues. Residues 326 to 359 (DEPEYVPDPDAEKPEDWDEDMDGEWEAPQIANPR) form an interaction with PPIB region. Cysteine 360 and cysteine 366 are oxidised to a cystine. Repeat copies occupy residues 367-377 (GVWQRPVIDNP), 381-391 (GKWKPPMIDNP), and 395-405 (GIWKPRKIPNP). Glutamate 425 is an an alpha-D-glucoside binding site. Residue aspartate 436 coordinates Ca(2+). A helical transmembrane segment spans residues 482 to 502 (WLWVVYILTVALPVFLVILFC). S-palmitoyl cysteine attachment occurs at residues cysteine 502 and cysteine 503. At 503–592 (CSGKKQTSGM…SPRNRKPRRE (90 aa)) the chain is on the cytoplasmic side. The tract at residues 503–592 (CSGKKQTSGM…SPRNRKPRRE (90 aa)) is sufficient to mediate interaction with SGIP1. The tract at residues 511-592 (GMEYKKTDAP…SPRNRKPRRE (82 aa)) is disordered. Residues 525-547 (KEEEEEKEEEKDKGDEEEEGEEK) are compositionally biased toward acidic residues. Serine 554 carries the post-translational modification Phosphoserine. At threonine 562 the chain carries Phosphothreonine. The residue at position 564 (serine 564) is a Phosphoserine; by MAPK3. The residue at position 583 (serine 583) is a Phosphoserine.

The protein belongs to the calreticulin family. Interacts with MAPK3/ERK1. Interacts with KCNH2. Associates with ribosomes. Interacts with SGIP1; involved in negative regulation of endocytosis. The palmitoylated form interacts with the ribosome-translocon complex component SSR1, promoting efficient folding of glycoproteins. Interacts with SERPINA2P/SERPINA2 and with the S and Z variants of SERPINA1. Interacts with PPIB. Interacts with ZNRF4. Interacts with SMIM22. Interacts with TMX2. Interacts with TMEM35A/NACHO. Interacts with CHRNA7. Interacts with reticulophagy regulators RETREG2 and RETREG3. Interacts with DNM1L; may form part of a larger protein complex at the ER-mitochondrial interface during mitochondrial fission. Interacts with ADAM7. As to quaternary structure, (Microbial infection) Interacts with HBV large envelope protein, isoform L. In terms of assembly, (Microbial infection) Interacts with HBV large envelope protein, isoform M; this association may be essential for isoform M proper secretion. Post-translationally, phosphorylated at Ser-564 by MAPK3/ERK1. Phosphorylation by MAPK3/ERK1 increases its association with ribosomes. In terms of processing, palmitoylation by DHHC6 leads to the preferential localization to the perinuclear rough ER. It mediates the association of calnexin with the ribosome-translocon complex (RTC) which is required for efficient folding of glycosylated proteins. Ubiquitinated, leading to proteasomal degradation. Probably ubiquitinated by ZNRF4.

Its subcellular location is the endoplasmic reticulum membrane. It localises to the mitochondrion membrane. The protein localises to the melanosome membrane. Calcium-binding protein that interacts with newly synthesized monoglucosylated glycoproteins in the endoplasmic reticulum. It may act in assisting protein assembly and/or in the retention within the ER of unassembled protein subunits. It seems to play a major role in the quality control apparatus of the ER by the retention of incorrectly folded proteins. Associated with partial T-cell antigen receptor complexes that escape the ER of immature thymocytes, it may function as a signaling complex regulating thymocyte maturation. Additionally it may play a role in receptor-mediated endocytosis at the synapse. The protein is Calnexin (CANX) of Homo sapiens (Human).